The primary structure comprises 221 residues: UPF0502 protein PSPA7_1674 (221 aa).

It belongs to the UPF0502 family.

The polypeptide is UPF0502 protein PSPA7_1674 (Pseudomonas paraeruginosa (strain DSM 24068 / PA7) (Pseudomonas aeruginosa (strain PA7))).